Here is a 91-residue protein sequence, read N- to C-terminus: Large ribosomal subunit protein bL27 (91 aa).

The protein belongs to the bacterial ribosomal protein bL27 family. As to quaternary structure, part of the 50S ribosomal subunit. Contacts protein L18.

Its function is as follows. Binds the 5S and 23S rRNAs and also the tRNA in the P site. The protein is Large ribosomal subunit protein bL27 (rpmA) of Deinococcus radiodurans (strain ATCC 13939 / DSM 20539 / JCM 16871 / CCUG 27074 / LMG 4051 / NBRC 15346 / NCIMB 9279 / VKM B-1422 / R1).